Reading from the N-terminus, the 335-residue chain is 2-acylglycerol O-acyltransferase 1 (335 aa).

2 helical membrane-spanning segments follow: residues W24–L44 and L47–A67. 3 N-linked (GlcNAc...) asparagine glycosylation sites follow: N77, N125, and N180.

Belongs to the diacylglycerol acyltransferase family.

It is found in the endoplasmic reticulum membrane. The catalysed reaction is a 2-acylglycerol + an acyl-CoA = a 1,2-diacylglycerol + CoA. The enzyme catalyses a 2-acylglycerol + an acyl-CoA = a 1,2-diacyl-sn-glycerol + CoA. It catalyses the reaction a 2-acylglycerol + an acyl-CoA = a 2,3-diacyl-sn-glycerol + CoA. It carries out the reaction a 1-acylglycerol + an acyl-CoA = a 1,2-diacylglycerol + CoA. The catalysed reaction is a 1-acylglycerol + an acyl-CoA = a 1,3-diacylglycerol + CoA. The enzyme catalyses a 1-acyl-sn-glycerol + an acyl-CoA = a 1,3-diacyl-sn-glycerol + CoA. It catalyses the reaction a 3-acyl-sn-glycerol + an acyl-CoA = a 1,3-diacyl-sn-glycerol + CoA. It functions in the pathway glycerolipid metabolism; triacylglycerol biosynthesis. Its function is as follows. Involved in glycerolipid synthesis and lipid metabolism. Catalyzes the formation of diacylglycerol, the precursor of triacylglycerol, by transferring the acyl chain of a fatty acyl-CoA to a monoacylglycerol, mainly at the sn-1 or sn-3 positions. It uses both sn-2-monoacylglycerol (2-acylglycerol) and sn-1-monoacylglycerol (1-acyl-sn-glycerol) equally well as substrates, and uses sn-3-monoacylglycerol (3-acyl-sn-glycerol) with lower efficiency. This chain is 2-acylglycerol O-acyltransferase 1 (mogat1), found in Xenopus tropicalis (Western clawed frog).